Consider the following 245-residue polypeptide: Ribonuclease PH (245 aa).

Phosphate contacts are provided by residues Arg-86 and 124 to 126 (GTR).

Belongs to the RNase PH family. In terms of assembly, homohexameric ring arranged as a trimer of dimers.

It carries out the reaction tRNA(n+1) + phosphate = tRNA(n) + a ribonucleoside 5'-diphosphate. In terms of biological role, phosphorolytic 3'-5' exoribonuclease that plays an important role in tRNA 3'-end maturation. Removes nucleotide residues following the 3'-CCA terminus of tRNAs; can also add nucleotides to the ends of RNA molecules by using nucleoside diphosphates as substrates, but this may not be physiologically important. Probably plays a role in initiation of 16S rRNA degradation (leading to ribosome degradation) during starvation. In Bacillus anthracis (strain A0248), this protein is Ribonuclease PH.